Reading from the N-terminus, the 271-residue chain is p-hydroxybenzoate hydroxylase transcriptional activator (271 aa).

Positions 23 to 83 constitute an HTH iclR-type domain; sequence IAGLAKGLAL…TDEHYFWLTH (61 aa). Residues 45-64 constitute a DNA-binding region (H-T-H motif); sequence VTQVAERTGISRTAARRYLK. In terms of domain architecture, IclR-ED spans 98–271; that stretch reads LPKVAQSFLN…NTANELRNLV (174 aa).

Its function is as follows. Positive regulator of the pobA gene for p-hydroxybenzoate hydroxylase. The protein is p-hydroxybenzoate hydroxylase transcriptional activator (pobR) of Acinetobacter baylyi (strain ATCC 33305 / BD413 / ADP1).